A 305-amino-acid chain; its full sequence is LysM and putative peptidoglycan-binding domain-containing protein 3 (305 aa).

Topologically, residues 1–221 (MTGRNQHNGF…PYYGADWGMR (221 aa)) are extracellular. The N-linked (GlcNAc...) asparagine glycan is linked to Asn29. Residues 31–60 (SETEYSEEDGEAFELRSRGRERHHRSTSRD) form a disordered region. A LysM domain is found at 68-112 (LIREIKEGDTLISISLQYFCTVADIKRANNLLTEQDFFALRSLRI). Over residues 121 to 144 (TETHNTAPHKSSSPSGTCRITETP) the composition is skewed to polar residues. The segment at 121–156 (TETHNTAPHKSSSPSGTCRITETPVSGASLDSTSSS) is disordered. The segment covering 146-156 (SGASLDSTSSS) has biased composition (low complexity). Residues 222 to 242 (WWTAVAIMLVVGIVTPVFYLL) traverse the membrane as a helical segment. At 243–305 (YYEVLMKADV…QHHVKHQEET (63 aa)) the chain is on the cytoplasmic side.

The protein resides in the cell membrane. It is found in the golgi apparatus. Its function is as follows. Essential for Golgi structural integrity. This chain is LysM and putative peptidoglycan-binding domain-containing protein 3 (lysmd3), found in Danio rerio (Zebrafish).